Reading from the N-terminus, the 364-residue chain is Histidinol-phosphate aminotransferase 2 (364 aa).

Lysine 223 carries the post-translational modification N6-(pyridoxal phosphate)lysine.

The protein belongs to the class-II pyridoxal-phosphate-dependent aminotransferase family. Histidinol-phosphate aminotransferase subfamily. As to quaternary structure, homodimer. It depends on pyridoxal 5'-phosphate as a cofactor.

The enzyme catalyses L-histidinol phosphate + 2-oxoglutarate = 3-(imidazol-4-yl)-2-oxopropyl phosphate + L-glutamate. The protein operates within amino-acid biosynthesis; L-histidine biosynthesis; L-histidine from 5-phospho-alpha-D-ribose 1-diphosphate: step 7/9. The protein is Histidinol-phosphate aminotransferase 2 (hisC2) of Oceanobacillus iheyensis (strain DSM 14371 / CIP 107618 / JCM 11309 / KCTC 3954 / HTE831).